A 306-amino-acid chain; its full sequence is MALCALTSALRSLSLASAAITARVPTLLPAAQIQSNVLLQLPPALVSPSYRPVHMSADRSAKFVSWKSRTKYTVKPVKMRKSGGRDHTGRIRVHGIGGGHKQNYRMIDFLRFRPEKEKAPEPFEEKVVVVRYDPCRSADIALVAGGSRKRWIIATENMKAGDTILNSNHIGRMAVAAQEGDAHPLGALPVGTLINNVESEPGRGAQYIRAAGTCGVLLRKVNGTAIIQLPSKRQMQVLESCTATVGRVSNVNHNQRVIGKAGRNRWLGKRPNSGLWQRKGGWAGRKIRPLPPMKSYVKLPSAAAQN.

The N-terminal 60 residues, M1–S60, are a transit peptide targeting the mitochondrion.

Belongs to the universal ribosomal protein uL2 family. Component of the mitochondrial ribosome large subunit (39S) which comprises a 16S rRNA and about 50 distinct proteins.

It is found in the mitochondrion. This Mus musculus (Mouse) protein is Large ribosomal subunit protein uL2m (Mrpl2).